Consider the following 299-residue polypeptide: Bifunctional protein FolD 2 (299 aa).

Residues 168–170, Ser193, and Ile234 contribute to the NADP(+) site; that span reads GRS.

This sequence belongs to the tetrahydrofolate dehydrogenase/cyclohydrolase family. As to quaternary structure, homodimer.

It catalyses the reaction (6R)-5,10-methylene-5,6,7,8-tetrahydrofolate + NADP(+) = (6R)-5,10-methenyltetrahydrofolate + NADPH. The enzyme catalyses (6R)-5,10-methenyltetrahydrofolate + H2O = (6R)-10-formyltetrahydrofolate + H(+). The protein operates within one-carbon metabolism; tetrahydrofolate interconversion. In terms of biological role, catalyzes the oxidation of 5,10-methylenetetrahydrofolate to 5,10-methenyltetrahydrofolate and then the hydrolysis of 5,10-methenyltetrahydrofolate to 10-formyltetrahydrofolate. The polypeptide is Bifunctional protein FolD 2 (Rhizobium meliloti (strain 1021) (Ensifer meliloti)).